Consider the following 126-residue polypeptide: Acidic phospholipase A2 S1E6-b (126 aa).

The N-terminal stretch at 1–3 (VEG) is a signal peptide. Intrachain disulfides connect Cys-29/Cys-119, Cys-31/Cys-47, Cys-46/Cys-98, Cys-52/Cys-126, Cys-53/Cys-91, Cys-60/Cys-84, and Cys-78/Cys-89. Residues Tyr-30, Gly-32, and Gly-34 each contribute to the Ca(2+) site. His-50 is a catalytic residue. Residue Asp-51 coordinates Ca(2+). Residue Asp-92 is part of the active site.

In terms of assembly, homodimer. Ca(2+) serves as cofactor. In terms of tissue distribution, expressed by the venom gland.

It localises to the secreted. The catalysed reaction is a 1,2-diacyl-sn-glycero-3-phosphocholine + H2O = a 1-acyl-sn-glycero-3-phosphocholine + a fatty acid + H(+). Snake venom phospholipase that inhibits ADP-induced platelet aggregation. PLA2 catalyzes the calcium-dependent hydrolysis of the 2-acyl groups in 3-sn-phosphoglycerides. The polypeptide is Acidic phospholipase A2 S1E6-b (Calloselasma rhodostoma (Malayan pit viper)).